Consider the following 472-residue polypeptide: MNKTALKTRFAPSPSGLLHLGNIRTALFNALLARRSRGLFLLRIEDTDQERSSEEYVTALMEDLRWLALEWQEGPEVEGEAGPYRQSQRRSVYQADFQRLEAEKLAYPCFCSQEELERVRKRQLAAGQAPRYPGTCARLSPEEVEGKLAAGFKSALRFRVPSLTTIEFEDLVRGPQRFATGDIGDFIIRRTDGSPAFFFSNALDDALMGVTHVLRGEDHLTNTPRQILLLRALGLPIPRYGHIAMIVGRDGAPLSKRHGSRSVRELREAGYLPEALCNYLARLGHHYEDSGFLDLDTLAAQFDLARLGRAPARFDPQQLHHWQREALARCDLDTLERWLAPVAASQVPADKYQDFIETVRPNVVLPEDALHWAKVLFSEELVLKDGILPIIHEAGAQFFTQALAAVDGSGTDFKALAAQLKQTTGAKGRSLFLPLRAAFTGELDGPELARLLPLMGVARVRQRLQNCVDQSY.

Positions 12–22 (PSPSGLLHLGN) match the 'HIGH' region motif. The short motif at 253–257 (PLSKR) is the 'KMSKS' region element. Residue lysine 256 participates in ATP binding.

Belongs to the class-I aminoacyl-tRNA synthetase family. Glutamate--tRNA ligase type 1 subfamily. As to quaternary structure, monomer.

It is found in the cytoplasm. It carries out the reaction tRNA(Glu) + L-glutamate + ATP = L-glutamyl-tRNA(Glu) + AMP + diphosphate. In terms of biological role, catalyzes the attachment of glutamate to tRNA(Glu) in a two-step reaction: glutamate is first activated by ATP to form Glu-AMP and then transferred to the acceptor end of tRNA(Glu). This chain is Glutamate--tRNA ligase 2, found in Nitrosococcus oceani (strain ATCC 19707 / BCRC 17464 / JCM 30415 / NCIMB 11848 / C-107).